We begin with the raw amino-acid sequence, 85 residues long: Large ribosomal subunit protein bL27 (85 aa).

Belongs to the bacterial ribosomal protein bL27 family.

In Pseudomonas fluorescens (strain ATCC BAA-477 / NRRL B-23932 / Pf-5), this protein is Large ribosomal subunit protein bL27.